A 66-amino-acid polypeptide reads, in one-letter code: Panusin (66 aa).

The signal sequence occupies residues 1 to 22; sequence MKTKAVLMLMLLVLVAATLVQG. The propeptide occupies 23 to 26; that stretch reads EPEP. Disulfide bonds link cysteine 32/cysteine 54, cysteine 39/cysteine 61, and cysteine 44/cysteine 60. Position 65 is a tyrosine amide (tyrosine 65).

As to quaternary structure, forms dimers and higher-order oligomers. Contains 3 disulfide bonds.

Antimicrobial peptide. Has antibacterial activity against Gram-positive bacteria S.aureus ATCC 29737 and B.subtilis ATCC 6633 as well as against Gram-negative bacteria E.coli ATCC 10536 and K.pneumoniae ATCC 10031. The protein is Panusin of Panulirus argus (Caribbean spiny lobster).